A 300-amino-acid chain; its full sequence is UDP-N-acetylenolpyruvoylglucosamine reductase (300 aa).

In terms of domain architecture, FAD-binding PCMH-type spans 29-193 (TGGPADLLVF…LSATFKLRSG (165 aa)). Residue R172 is part of the active site. The Proton donor role is filled by S222. Residue E292 is part of the active site.

It belongs to the MurB family. FAD is required as a cofactor.

The protein localises to the cytoplasm. The enzyme catalyses UDP-N-acetyl-alpha-D-muramate + NADP(+) = UDP-N-acetyl-3-O-(1-carboxyvinyl)-alpha-D-glucosamine + NADPH + H(+). It participates in cell wall biogenesis; peptidoglycan biosynthesis. Functionally, cell wall formation. The polypeptide is UDP-N-acetylenolpyruvoylglucosamine reductase (Pediococcus pentosaceus (strain ATCC 25745 / CCUG 21536 / LMG 10740 / 183-1w)).